The following is a 115-amino-acid chain: NADH-ubiquinone oxidoreductase chain 3 (115 aa).

Transmembrane regions (helical) follow at residues 4 to 24 (FMAL…AFWL), 55 to 75 (FFLV…LLPL), and 87 to 107 (MMLT…YEWV).

This sequence belongs to the complex I subunit 3 family. In terms of assembly, core subunit of respiratory chain NADH dehydrogenase (Complex I) which is composed of 45 different subunits. Interacts with TMEM186. Interacts with TMEM242.

The protein resides in the mitochondrion inner membrane. The enzyme catalyses a ubiquinone + NADH + 5 H(+)(in) = a ubiquinol + NAD(+) + 4 H(+)(out). Its function is as follows. Core subunit of the mitochondrial membrane respiratory chain NADH dehydrogenase (Complex I) which catalyzes electron transfer from NADH through the respiratory chain, using ubiquinone as an electron acceptor. Essential for the catalytic activity of complex I. This Osgoodomys banderanus (Michoacan deer mouse) protein is NADH-ubiquinone oxidoreductase chain 3.